A 126-amino-acid chain; its full sequence is C2H2-type zinc-finger transcription factor M5 (126 aa).

Disordered stretches follow at residues 17 to 52 (AQPD…NDNR) and 103 to 126 (EKKS…RVKD). Residues 38–48 (SNGSSSGTATD) are compositionally biased toward polar residues. The segment at 51 to 76 (NRCWDHGCNGKKFLNHSNLVRHRREN) adopts a C2H2-type 1; degenerate zinc-finger fold. The segment at 83-115 (FTCPMCGAYFSRSTARNQHLEKKSCNRVRRYSN) adopts a C2H2-type 2; degenerate zinc-finger fold. Positions 115–126 (NGRERPRPRVKD) are enriched in basic and acidic residues.

This sequence belongs to the GLI C2H2-type zinc-finger protein family.

The protein resides in the nucleus. Its function is as follows. Transcription factor that probably regulates the expression of the gene cluster that mediates the biosynthesis of squalestatin S1 (SQS1, also known as zaragozic acid A), a heavily oxidized fungal polyketide that offers potent cholesterol lowering activity by targeting squalene synthase (SS). In Phoma sp. (strain ATCC 20986 / MF5453), this protein is C2H2-type zinc-finger transcription factor M5.